The primary structure comprises 199 residues: uncharacterized protein (199 aa).

Helical transmembrane passes span 10-32 (LTSQ…FIGY), 37-59 (VYSA…INYY), 63-80 (LIVI…FALI), 83-100 (LGLI…GVYL), 104-121 (YQVY…INLF), 126-148 (LTVL…MGIT), and 163-185 (FDAI…TGII).

Its subcellular location is the cell membrane. This is an uncharacterized protein from Archaeoglobus fulgidus (strain ATCC 49558 / DSM 4304 / JCM 9628 / NBRC 100126 / VC-16).